Reading from the N-terminus, the 506-residue chain is DNA nucleotidylexotransferase (506 aa).

A Nuclear localization signal motif is present at residues 11–17; it reads SQRKRQK. Residues 27–124 form the BRCT domain; that stretch reads GYEIKFNKLV…RPVDLEKKYH (98 aa). An involved in DNA binding region spans residues 258–262; that stretch reads VGVKT. Residues 333-338 and 342-345 contribute to the a 2'-deoxyribonucleoside 5'-triphosphate site; these read GFRRGK and HDID. Mg(2+) contacts are provided by Asp-343, Asp-345, and Asp-430. 445 to 446 provides a ligand contact to a 2'-deoxyribonucleoside 5'-triphosphate; that stretch reads GW.

It belongs to the DNA polymerase type-X family. The cofactor is Mg(2+).

The protein localises to the nucleus. It carries out the reaction DNA(n) + a 2'-deoxyribonucleoside 5'-triphosphate = DNA(n+1) + diphosphate. In terms of biological role, template-independent DNA polymerase which catalyzes the random addition of deoxynucleoside 5'-triphosphate to the 3'-end of a DNA initiator. One of the in vivo functions of this enzyme is the addition of nucleotides at the junction (N region) of rearranged Ig heavy chain and T-cell receptor gene segments during the maturation of B- and T-cells. This is DNA nucleotidylexotransferase (DNTT) from Gallus gallus (Chicken).